The primary structure comprises 191 residues: UPF0312 protein Shew185_3055 (191 aa).

A signal peptide spans 1-22 (MKKQLLSALIGASLLAPMAASA).

Belongs to the UPF0312 family. Type 1 subfamily.

It localises to the periplasm. The protein is UPF0312 protein Shew185_3055 of Shewanella baltica (strain OS185).